The sequence spans 882 residues: DNA mismatch repair protein MutS (882 aa).

629–636 (GPNMGGKS) is a binding site for ATP.

It belongs to the DNA mismatch repair MutS family.

Functionally, this protein is involved in the repair of mismatches in DNA. It is possible that it carries out the mismatch recognition step. This protein has a weak ATPase activity. The polypeptide is DNA mismatch repair protein MutS (Ralstonia pickettii (strain 12J)).